A 304-amino-acid chain; its full sequence is Undecaprenyl-diphosphatase (304 aa).

The next 7 membrane-spanning stretches (helical) occupy residues 1-21 (MSLL…FLPV), 54-74 (TTLA…AAGL), 90-110 (LAWF…LFEE), 114-134 (ALGN…LLAA), 192-212 (FLLS…KTVP), 225-245 (LVGT…LLGW), and 253-273 (LFVV…WQGV).

Belongs to the UppP family.

It localises to the cell inner membrane. The catalysed reaction is di-trans,octa-cis-undecaprenyl diphosphate + H2O = di-trans,octa-cis-undecaprenyl phosphate + phosphate + H(+). Its function is as follows. Catalyzes the dephosphorylation of undecaprenyl diphosphate (UPP). Confers resistance to bacitracin. This is Undecaprenyl-diphosphatase from Anaeromyxobacter sp. (strain Fw109-5).